A 170-amino-acid chain; its full sequence is Histone H1.9 (170 aa).

An H15 domain is found at R34–K108. S56 is subject to Phosphoserine. The interval A118 to P140 is disordered.

It belongs to the histone H1/H5 family. Expressed exclusively in the testis by haploid germ cells (at protein level).

The protein resides in the nucleus. The protein localises to the chromosome. DNA-binding protein that may be implicated in chromatin remodeling and/or transcriptional regulation during spermiogenesis, the process of spermatid maturation into spermatozoa. The sequence is that of Histone H1.9 from Mus musculus (Mouse).